The sequence spans 273 residues: Peroxiredoxin-4 (273 aa).

Residues 1–40 (METWSKLLDGTTPSRRWRKLVLLLPPLLLFLLQTEALQGL) form the signal peptide. The region spanning 81 to 239 (AKISKPAPYW…TLRLVQAFQY (159 aa)) is the Thioredoxin domain. Cysteine 126 functions as the Cysteine sulfenic acid (-SOH) intermediate in the catalytic mechanism.

The protein belongs to the peroxiredoxin family. AhpC/Prx1 subfamily. As to quaternary structure, homodimer; disulfide-linked, upon oxidation. 5 homodimers assemble to form a ring-like decamer. In terms of processing, the enzyme can be inactivated by further oxidation of the cysteine sulfenic acid (C(P)-SOH) to sulphinic acid (C(P)-SO2H) and sulphonic acid (C(P)-SO3H) instead of its condensation to a disulfide bond.

It is found in the cytoplasm. Its subcellular location is the endoplasmic reticulum. It localises to the secreted. It carries out the reaction a hydroperoxide + [thioredoxin]-dithiol = an alcohol + [thioredoxin]-disulfide + H2O. Its function is as follows. Thiol-specific peroxidase that catalyzes the reduction of hydrogen peroxide and organic hydroperoxides to water and alcohols, respectively. Plays a role in cell protection against oxidative stress by detoxifying peroxides and as sensor of hydrogen peroxide-mediated signaling events. Regulates the activation of NF-kappa-B in the cytosol by a modulation of I-kappa-B-alpha phosphorylation. This Rattus norvegicus (Rat) protein is Peroxiredoxin-4 (Prdx4).